The chain runs to 343 residues: Glutamine synthetase (343 aa).

Residues 3 to 87 (FKAEYIWIDG…CEVLNIDLTP (85 aa)) enclose the GS beta-grasp domain. The region spanning 92–343 (TRAALAEVAE…CSALEKAGQV (252 aa)) is the GS catalytic domain. Mg(2+) is bound by residues Glu-113, Glu-115, Glu-174, and Glu-181. Glu-279 contributes to the L-glutamate binding site.

Belongs to the glutamine synthetase family. As to quaternary structure, homooctamer and homotetramer. The cofactor is Mg(2+).

It is found in the cytoplasm. It carries out the reaction L-glutamate + NH4(+) + ATP = L-glutamine + ADP + phosphate + H(+). In terms of biological role, catalyzes the ATP-dependent biosynthesis of glutamine from glutamate and ammonia. In Streptomyces viridochromogenes, this protein is Glutamine synthetase.